The primary structure comprises 690 residues: Elongation factor G (690 aa).

In terms of domain architecture, tr-type G spans 8–282 (ERVRNIGIAA…AVIDYLPAPV (275 aa)). GTP is bound by residues 17–24 (AHIDAGKT), 81–85 (DTPGH), and 135–138 (NKMD).

It belongs to the TRAFAC class translation factor GTPase superfamily. Classic translation factor GTPase family. EF-G/EF-2 subfamily.

It localises to the cytoplasm. Catalyzes the GTP-dependent ribosomal translocation step during translation elongation. During this step, the ribosome changes from the pre-translocational (PRE) to the post-translocational (POST) state as the newly formed A-site-bound peptidyl-tRNA and P-site-bound deacylated tRNA move to the P and E sites, respectively. Catalyzes the coordinated movement of the two tRNA molecules, the mRNA and conformational changes in the ribosome. The sequence is that of Elongation factor G from Parasynechococcus marenigrum (strain WH8102).